Reading from the N-terminus, the 148-residue chain is Glyoxalase domain-containing protein 5 (148 aa).

The region spanning 25-145 (RLDHIVMTVK…DRNLLEVSSY (121 aa)) is the VOC domain.

This sequence belongs to the glyoxalase I family.

The polypeptide is Glyoxalase domain-containing protein 5 (Glod5) (Mus musculus (Mouse)).